The chain runs to 69 residues: Mu-conotoxin-like Am3.1 (69 aa).

Positions 1-20 (MMSKLRVLLIICLLLFPLTA) are cleaved as a signal peptide. Residues 21–52 (VPLDGDQPADRPAERTQDDISSEHHPMFDAVR) constitute a propeptide that is removed on maturation. Residues 22–43 (PLDGDQPADRPAERTQDDISSE) are disordered. Residues 28-43 (PADRPAERTQDDISSE) are compositionally biased toward basic and acidic residues. 4-hydroxyproline; partial; in minor form is present on proline 66. The residue at position 68 (cysteine 68) is a Cysteine amide.

Belongs to the conotoxin M family. Post-translationally, mostly non-hydroxylated. In terms of processing, contains 3 disulfide bonds. Expressed by the venom duct.

The protein resides in the secreted. In terms of biological role, mu-conotoxins block voltage-gated sodium channels (Nav). This is Mu-conotoxin-like Am3.1 from Conus amadis (Amadis cone).